A 936-amino-acid chain; its full sequence is ATP-dependent RNA helicase dbp10 (936 aa).

The disordered stretch occupies residues 1 to 48 (MPSRAASPALSENEFDITGALFQNDSDSDAETQKPTKRKKVPAAPNVN). Residues 91 to 119 (GGFQAMGLNANLLKAIARKGFSVPTPIQR) carry the Q motif motif. The Helicase ATP-binding domain occupies 122–294 (IPVIMEDQDV…RAGLQDPTLV (173 aa)). 135-142 (ARTGSGKT) is a binding site for ATP. The DEAD box signature appears at 242–245 (DEAD). Disordered regions lie at residues 337–363 (TEASLRLKEKGPEDSKNKKRKRAEMER), 642–684 (EAKK…PDNM), 701–721 (TTDKASKSNSNSKSDSTPTTL), and 843–936 (TPGL…SRKK). Residues 341-352 (LRLKEKGPEDSK) show a composition bias toward basic and acidic residues. A Helicase C-terminal domain is found at 360 to 511 (EMERAVNMKE…SDQVNFAEDV (152 aa)). The span at 663–675 (AEVDGDAFSDLEG) shows a compositional bias: acidic residues. Residues 701 to 717 (TTDKASKSNSNSKSDST) are compositionally biased toward low complexity. The segment covering 867–895 (EKAPKAADPLRGDYEKMKKKAEAARERAA) has biased composition (basic and acidic residues). Residues 896–906 (SKVGGVTSGGK) show a composition bias toward low complexity. The segment covering 907-916 (SEIRNTDDIR) has biased composition (basic and acidic residues). The span at 917–936 (KARKLKQKRREKNARPSRKK) shows a compositional bias: basic residues.

This sequence belongs to the DEAD box helicase family. DDX54/DBP10 subfamily.

The protein localises to the nucleus. The protein resides in the nucleolus. It catalyses the reaction ATP + H2O = ADP + phosphate + H(+). In terms of biological role, ATP-binding RNA helicase involved in the biogenesis of 60S ribosomal subunits and is required for the normal formation of 25S and 5.8S rRNAs. In Emericella nidulans (strain FGSC A4 / ATCC 38163 / CBS 112.46 / NRRL 194 / M139) (Aspergillus nidulans), this protein is ATP-dependent RNA helicase dbp10 (dbp10).